The primary structure comprises 353 residues: Protein O-mannose kinase (353 aa).

The Cytoplasmic segment spans residues 1–19 (MEKKAHFVKRDFPPREAPS). Residues 20-40 (LLLLLLVVAVLLLNALLYLYL) traverse the membrane as a helical; Signal-anchor for type II membrane protein segment. Residues 41-353 (GNLHGSSGRA…AAMPSTREML (313 aa)) are Lumenal-facing. Positions 83-353 (VRKLKCVGEG…AAMPSTREML (271 aa)) constitute a Protein kinase domain. N-linked (GlcNAc...) asparagine glycosylation is found at Asn-163 and Asn-237.

This sequence belongs to the protein kinase superfamily. Ser/Thr protein kinase family. STKL subfamily.

It localises to the endoplasmic reticulum membrane. The catalysed reaction is 3-O-[beta-D-GalNAc-(1-&gt;3)-beta-D-GlcNAc-(1-&gt;4)-alpha-D-Man]-L-Thr-[protein] + ATP = 3-O-[beta-D-GalNAc-(1-&gt;3)-beta-D-GlcNAc-(1-&gt;4)-(O-6-P-alpha-D-Man)]-Thr-[protein] + ADP + H(+). In terms of biological role, protein O-mannose kinase that specifically mediates phosphorylation at the 6-position of an O-mannose of the trisaccharide (N-acetylgalactosamine (GalNAc)-beta-1,3-N-acetylglucosamine (GlcNAc)-beta-1,4-mannose) to generate phosphorylated O-mannosyl trisaccharide (N-acetylgalactosamine-beta-1,3-N-acetylglucosamine-beta-1,4-(phosphate-6-)mannose). Phosphorylated O-mannosyl trisaccharide is a carbohydrate structure present in alpha-dystroglycan (DAG1), which is required for binding laminin G-like domain-containing extracellular proteins with high affinity. Only shows kinase activity when the GalNAc-beta-3-GlcNAc-beta-terminus is linked to the 4-position of O-mannose, suggesting that this disaccharide serves as the substrate recognition motif. The sequence is that of Protein O-mannose kinase (POMK) from Gallus gallus (Chicken).